The chain runs to 227 residues: Prolactin-5A1 (227 aa).

The N-terminal stretch at 1 to 27 (MQIQPHPSGALLLLLLSNLLMWENVAS) is a signal peptide. A glycan (N-linked (GlcNAc...) asparagine) is linked at N47. C85 and C204 form a disulfide bridge.

It belongs to the somatotropin/prolactin family. In terms of tissue distribution, expressed specifically in placenta. Highly expressed in invasive trophoblast cells lining the central placental vessel.

It localises to the secreted. The protein is Prolactin-5A1 (Prl5a1) of Rattus norvegicus (Rat).